We begin with the raw amino-acid sequence, 193 residues long: MKNLLLILIGAVLVNNFVLARFLGLCPFLGVSRKVETALGMGMAVTFVMVVASGCTWVLQYLVLTPYHLDYLQTIAFILVIATLVQMVEMIVRKSSPVLYQSLGIFLPLITTNCAVLGLAVLNIQQGYSFVQSLVFAFGGAVGFTLALVLFAGLRERLRLCPVPAAFRGTPIELITAGLLALAFMGFAGLVPG.

A run of 6 helical transmembrane segments spans residues 4 to 24 (LLLI…RFLG), 39 to 59 (LGMG…TWVL), 72 to 92 (LQTI…EMIV), 102 to 122 (SLGI…LAVL), 134 to 154 (LVFA…FAGL), and 171 to 191 (PIEL…AGLV).

Belongs to the NqrDE/RnfAE family. In terms of assembly, the complex is composed of six subunits: RnfA, RnfB, RnfC, RnfD, RnfE and RnfG.

It localises to the cell inner membrane. Functionally, part of a membrane-bound complex that couples electron transfer with translocation of ions across the membrane. This is Ion-translocating oxidoreductase complex subunit A from Syntrophotalea carbinolica (strain DSM 2380 / NBRC 103641 / GraBd1) (Pelobacter carbinolicus).